The following is a 760-amino-acid chain: ATP-dependent DNA helicase Hel308 (760 aa).

ATP is bound by residues glutamine 28 and 46–53 (IPTASGKT). One can recognise a Helicase ATP-binding domain in the interval 33–199 (EMGLLEKKNL…WLGAALVLSE (167 aa)). Positions 144–147 (DEIH) match the DEAH box motif. In terms of domain architecture, Helicase C-terminal spans 232-426 (AVNLVLDTIK…SKLGTENALR (195 aa)).

The protein belongs to the helicase family. Hel308 subfamily. Monomer.

The enzyme catalyses Couples ATP hydrolysis with the unwinding of duplex DNA by translocating in the 3'-5' direction.. It carries out the reaction ATP + H2O = ADP + phosphate + H(+). Its function is as follows. DNA-dependent ATPase and 3'-5' DNA helicase that may be involved in repair of stalled replication forks. The protein is ATP-dependent DNA helicase Hel308 of Methanococcoides burtonii (strain DSM 6242 / NBRC 107633 / OCM 468 / ACE-M).